The sequence spans 689 residues: DNA ligase (689 aa).

Residues 40–44 (DAEYD), 89–90 (SL), and E121 contribute to the NAD(+) site. Catalysis depends on K123, which acts as the N6-AMP-lysine intermediate. Positions 144, 179, 295, and 319 each coordinate NAD(+). Residues C413, C416, C431, and C437 each coordinate Zn(2+). In terms of domain architecture, BRCT spans 610 to 689 (RAQSSLTGKI…EEWLTLIKNA (80 aa)).

It belongs to the NAD-dependent DNA ligase family. LigA subfamily. Requires Mg(2+) as cofactor. Mn(2+) serves as cofactor.

It carries out the reaction NAD(+) + (deoxyribonucleotide)n-3'-hydroxyl + 5'-phospho-(deoxyribonucleotide)m = (deoxyribonucleotide)n+m + AMP + beta-nicotinamide D-nucleotide.. DNA ligase that catalyzes the formation of phosphodiester linkages between 5'-phosphoryl and 3'-hydroxyl groups in double-stranded DNA using NAD as a coenzyme and as the energy source for the reaction. It is essential for DNA replication and repair of damaged DNA. The protein is DNA ligase of Rickettsia akari (strain Hartford).